The primary structure comprises 147 residues: Ribonuclease H (147 aa).

The RNase H type-1 domain maps to 3-145; it reads TEDRVEIYTD…ADQLANKGVE (143 aa). Asp-12, Glu-50, Asp-72, and Asp-137 together coordinate Mg(2+).

Belongs to the RNase H family. As to quaternary structure, monomer. Mg(2+) is required as a cofactor.

It localises to the cytoplasm. It carries out the reaction Endonucleolytic cleavage to 5'-phosphomonoester.. Functionally, endonuclease that specifically degrades the RNA of RNA-DNA hybrids. The chain is Ribonuclease H from Chromobacterium violaceum (strain ATCC 12472 / DSM 30191 / JCM 1249 / CCUG 213 / NBRC 12614 / NCIMB 9131 / NCTC 9757 / MK).